Reading from the N-terminus, the 308-residue chain is MDLLRSLPLGLYLEQPQTWLHKLDPRVKFIWLMSFLTSYSFANNLWRILLVALLILFTLIARIPRRVWQQQMGWLLTLSFFVLAIAAISPDGLGVDYQSRLPTNPQVLTQSANTNNSATATEQLKSSKSYTYVLFHKGPVKVTRRSLDLAVRISTIIFTVIYSTNLYLLTTAPEEITAGVESLMQPLRRFKIPVTEITLTLTLSLRFIPLVLEEVQNLVRSVMTRAINWKKLGLKGAVKVWMIVAERLLENLLLRASQMASAMMVRGFTSPNEHRVPWHDLRLKLRDWLAIASLTIFWGIRVVFGNQI.

5 consecutive transmembrane segments (helical) span residues 41 to 61, 75 to 95, 153 to 173, 192 to 212, and 288 to 308; these read FANN…TLIA, LLTL…GLGV, ISTI…TTAP, IPVT…PLVL, and WLAI…GNQI.

The protein belongs to the ycf92 family.

Its subcellular location is the membrane. This Nostoc sp. (strain PCC 7120 / SAG 25.82 / UTEX 2576) protein is Ycf92-like protein.